The sequence spans 1150 residues: PAN2-PAN3 deadenylation complex catalytic subunit PAN2 (1150 aa).

WD repeat units follow at residues 26–67, 114–156, 158–194, and 290–328; these read AHHS…MEFQ, GHVN…ITKE, PAPN…VINT, and GHTH…VSFV. The linker stretch occupies residues 326–471; it reads SFVDQGLPVE…IRTDIESLKS (146 aa). The 391-residue stretch at 472-862 folds into the USP domain; the sequence is VVPNMYHLFE…TPLVVMFQLK (391 aa). Positions 911-1079 constitute an Exonuclease domain; sequence AIDAEFVLAK…HDSIEDANTA (169 aa). A divalent metal cation is bound by residues D913, E915, D1022, and D1075. Residues 1118 to 1150 are disordered; that stretch reads GQSAQRTETPPMVDDAQPGALLPYQPPELLQGS.

The protein belongs to the peptidase C19 family. PAN2 subfamily. In terms of assembly, forms a heterotrimer with an asymmetric homodimer of the regulatory subunit PAN3 to form the poly(A)-nuclease (PAN) deadenylation complex. A divalent metal cation is required as a cofactor.

It localises to the cytoplasm. The enzyme catalyses Exonucleolytic cleavage of poly(A) to 5'-AMP.. Its activity is regulated as follows. Positively regulated by the regulatory subunit PAN3. Catalytic subunit of the poly(A)-nuclease (PAN) deadenylation complex, one of two cytoplasmic mRNA deadenylases involved in mRNA turnover. PAN specifically shortens poly(A) tails of RNA and the activity is stimulated by poly(A)-binding protein PAB1. PAN deadenylation is followed by rapid degradation of the shortened mRNA tails by the CCR4-NOT complex. Deadenylated mRNAs are then degraded by two alternative mechanisms, namely exosome-mediated 3'-5' exonucleolytic degradation, or deadenylation-dependent mRNA decaping and subsequent 5'-3' exonucleolytic degradation by XRN1. May also be involved in post-transcriptional maturation of mRNA poly(A) tails. This chain is PAN2-PAN3 deadenylation complex catalytic subunit PAN2, found in Pyricularia oryzae (strain 70-15 / ATCC MYA-4617 / FGSC 8958) (Rice blast fungus).